Here is a 142-residue protein sequence, read N- to C-terminus: NCT transcriptional regulatory complex subunit B (142 aa).

Belongs to the NC2 beta/DR1 family. As to quaternary structure, forms the NCT transcriptional regulatory complex with nctA and mot1.

It is found in the nucleus. Its function is as follows. Part of the NCT transcriptional regulatory complex that acts as a key regulator of ergosterol biosynthesis and the azole exporter cdr1B. The NCT complex binds the promoters of genes linked to azole susceptibility, and especially represses the expression of cdr1B transporter. The chain is NCT transcriptional regulatory complex subunit B from Aspergillus fumigatus (strain CBS 144.89 / FGSC A1163 / CEA10) (Neosartorya fumigata).